Consider the following 63-residue polypeptide: Large ribosomal subunit protein bL28 (63 aa).

The protein belongs to the bacterial ribosomal protein bL28 family.

The sequence is that of Large ribosomal subunit protein bL28 from Mycoplasmopsis synoviae (strain 53) (Mycoplasma synoviae).